The following is a 122-amino-acid chain: Large ribosomal subunit protein eL22B (122 aa).

The protein belongs to the eukaryotic ribosomal protein eL22 family. In terms of assembly, component of the large ribosomal subunit (LSU). Mature yeast ribosomes consist of a small (40S) and a large (60S) subunit. The 40S small subunit contains 1 molecule of ribosomal RNA (18S rRNA) and 33 different proteins (encoded by 57 genes). The large 60S subunit contains 3 rRNA molecules (25S, 5.8S and 5S rRNA) and 46 different proteins (encoded by 81 genes).

The protein localises to the cytoplasm. Its function is as follows. Component of the ribosome, a large ribonucleoprotein complex responsible for the synthesis of proteins in the cell. The small ribosomal subunit (SSU) binds messenger RNAs (mRNAs) and translates the encoded message by selecting cognate aminoacyl-transfer RNA (tRNA) molecules. The large subunit (LSU) contains the ribosomal catalytic site termed the peptidyl transferase center (PTC), which catalyzes the formation of peptide bonds, thereby polymerizing the amino acids delivered by tRNAs into a polypeptide chain. The nascent polypeptides leave the ribosome through a tunnel in the LSU and interact with protein factors that function in enzymatic processing, targeting, and the membrane insertion of nascent chains at the exit of the ribosomal tunnel. This Saccharomyces cerevisiae (strain ATCC 204508 / S288c) (Baker's yeast) protein is Large ribosomal subunit protein eL22B.